Consider the following 386-residue polypeptide: MTDGALTRLEHGLAALKADHLARRRPLLDGAQGAHVTIDGRRVVSFCSNDYLGLANDPALVAAAHAALDGCGVGAGAAHLISGHHRLHLEFETDFAQWVGKPAALLFSTGYLANLAVVTALISRRGEVFADKLNHASLVDAAKLSGARFSRYRHGDLAQLESRLAASTARDRMIVSDLVFSMDGDVAPVDALLDLAERYDAWLYLDDAHGFGVLNGGRGGLSERARASTRVIYLATLGKAAGVAGASVAADGRVIEWLIQTARPYIYTTAAPPLLAAALRESLRQIAAGAARRGRLQRHVARLRSGLGGLKNAVLADSFTPIQPLIVGANADALTLSQALLQRGILVPAIRTPTVPANTARLRITLSAAHSDADVARLVETVHELA.

Arg23 provides a ligand contact to substrate. Residue 110-111 coordinates pyridoxal 5'-phosphate; it reads GY. His135 contacts substrate. Pyridoxal 5'-phosphate-binding residues include Ser181, His209, and Thr236. Lys239 is modified (N6-(pyridoxal phosphate)lysine). Residue Thr354 participates in substrate binding.

Belongs to the class-II pyridoxal-phosphate-dependent aminotransferase family. BioF subfamily. As to quaternary structure, homodimer. Requires pyridoxal 5'-phosphate as cofactor.

The enzyme catalyses 6-carboxyhexanoyl-[ACP] + L-alanine + H(+) = (8S)-8-amino-7-oxononanoate + holo-[ACP] + CO2. It functions in the pathway cofactor biosynthesis; biotin biosynthesis. Its function is as follows. Catalyzes the decarboxylative condensation of pimeloyl-[acyl-carrier protein] and L-alanine to produce 8-amino-7-oxononanoate (AON), [acyl-carrier protein], and carbon dioxide. The polypeptide is 8-amino-7-oxononanoate synthase (Thiobacillus denitrificans (strain ATCC 25259 / T1)).